A 152-amino-acid chain; its full sequence is Ribosomal RNA large subunit methyltransferase H (152 aa).

Residues Leu65, Gly96, and 115-120 (LGPMTW) each bind S-adenosyl-L-methionine.

This sequence belongs to the RNA methyltransferase RlmH family. Homodimer.

It is found in the cytoplasm. The enzyme catalyses pseudouridine(1915) in 23S rRNA + S-adenosyl-L-methionine = N(3)-methylpseudouridine(1915) in 23S rRNA + S-adenosyl-L-homocysteine + H(+). In terms of biological role, specifically methylates the pseudouridine at position 1915 (m3Psi1915) in 23S rRNA. The chain is Ribosomal RNA large subunit methyltransferase H from Gluconacetobacter diazotrophicus (strain ATCC 49037 / DSM 5601 / CCUG 37298 / CIP 103539 / LMG 7603 / PAl5).